The chain runs to 81 residues: D-alanyl carrier protein (81 aa).

A Carrier domain is found at 1-81 (MADEAIKNGV…KIIAKVEQAQ (81 aa)). The residue at position 39 (S39) is an O-(pantetheine 4'-phosphoryl)serine.

This sequence belongs to the DltC family. 4'-phosphopantetheine is transferred from CoA to a specific serine of apo-DCP.

It is found in the cytoplasm. The protein operates within cell wall biogenesis; lipoteichoic acid biosynthesis. In terms of biological role, carrier protein involved in the D-alanylation of lipoteichoic acid (LTA). The loading of thioester-linked D-alanine onto DltC is catalyzed by D-alanine--D-alanyl carrier protein ligase DltA. The DltC-carried D-alanyl group is further transferred to cell membrane phosphatidylglycerol (PG) by forming an ester bond, probably catalyzed by DltD. D-alanylation of LTA plays an important role in modulating the properties of the cell wall in Gram-positive bacteria, influencing the net charge of the cell wall. In Lacticaseibacillus casei (strain BL23) (Lactobacillus casei), this protein is D-alanyl carrier protein.